Consider the following 873-residue polypeptide: Bifunctional uridylyltransferase/uridylyl-removing enzyme (873 aa).

Positions 1–332 are uridylyltransferase; that stretch reads MKYLSPLSLS…HQGEQDDAII (332 aa). The interval 333-692 is uridylyl-removing; that stretch reads IDDDFQRRGR…ISKNASRGGT (360 aa). The 123-residue stretch at 451-573 folds into the HD domain; that stretch reads VDEHSIRLLK…VRDEERLDYL (123 aa). 2 consecutive ACT domains span residues 693-777 and 800-873; these read EIFV…RPPR and LMEF…RLSS.

Belongs to the GlnD family. Mg(2+) is required as a cofactor.

The catalysed reaction is [protein-PII]-L-tyrosine + UTP = [protein-PII]-uridylyl-L-tyrosine + diphosphate. The enzyme catalyses [protein-PII]-uridylyl-L-tyrosine + H2O = [protein-PII]-L-tyrosine + UMP + H(+). Its activity is regulated as follows. Uridylyltransferase (UTase) activity is inhibited by glutamine, while glutamine activates uridylyl-removing (UR) activity. Its function is as follows. Modifies, by uridylylation and deuridylylation, the PII regulatory proteins (GlnB and homologs), in response to the nitrogen status of the cell that GlnD senses through the glutamine level. Under low glutamine levels, catalyzes the conversion of the PII proteins and UTP to PII-UMP and PPi, while under higher glutamine levels, GlnD hydrolyzes PII-UMP to PII and UMP (deuridylylation). Thus, controls uridylylation state and activity of the PII proteins, and plays an important role in the regulation of nitrogen assimilation and metabolism. This Aliivibrio fischeri (strain ATCC 700601 / ES114) (Vibrio fischeri) protein is Bifunctional uridylyltransferase/uridylyl-removing enzyme.